A 409-amino-acid polypeptide reads, in one-letter code: D-galactonate dehydratase family member Achl_0790 (409 aa).

A Mg(2+)-binding site is contributed by Asp-217. Residue His-219 coordinates D-arabinonate. Residues Glu-243 and Glu-269 each contribute to the Mg(2+) site. Glu-269, Arg-290, His-319, and Glu-346 together coordinate D-arabinonate.

Belongs to the mandelate racemase/muconate lactonizing enzyme family. GalD subfamily.

In terms of biological role, has no detectable activity with D-mannonate and with a panel of 70 other acid sugars (in vitro), in spite of the conservation of the residues that are expected to be important for catalytic activity and cofactor binding. May have evolved a divergent function. This chain is D-galactonate dehydratase family member Achl_0790, found in Pseudarthrobacter chlorophenolicus (strain ATCC 700700 / DSM 12829 / CIP 107037 / JCM 12360 / KCTC 9906 / NCIMB 13794 / A6) (Arthrobacter chlorophenolicus).